The chain runs to 107 residues: Large ribosomal subunit protein uL24 (107 aa).

This sequence belongs to the universal ribosomal protein uL24 family. In terms of assembly, part of the 50S ribosomal subunit.

One of two assembly initiator proteins, it binds directly to the 5'-end of the 23S rRNA, where it nucleates assembly of the 50S subunit. Its function is as follows. One of the proteins that surrounds the polypeptide exit tunnel on the outside of the subunit. This Mesomycoplasma hyopneumoniae (strain J / ATCC 25934 / NCTC 10110) (Mycoplasma hyopneumoniae) protein is Large ribosomal subunit protein uL24.